Here is a 369-residue protein sequence, read N- to C-terminus: Peptide chain release factor 2 (369 aa).

The residue at position 250 (Q250) is an N5-methylglutamine.

This sequence belongs to the prokaryotic/mitochondrial release factor family. Methylated by PrmC. Methylation increases the termination efficiency of RF2.

It localises to the cytoplasm. Functionally, peptide chain release factor 2 directs the termination of translation in response to the peptide chain termination codons UGA and UAA. The polypeptide is Peptide chain release factor 2 (prfB) (Rickettsia typhi (strain ATCC VR-144 / Wilmington)).